Here is a 206-residue protein sequence, read N- to C-terminus: Ribosomal RNA large subunit methyltransferase E (206 aa).

Residues Gly-60, Trp-62, Asp-80, Asp-96, and Asp-121 each contribute to the S-adenosyl-L-methionine site. Residue Lys-161 is the Proton acceptor of the active site.

The protein belongs to the class I-like SAM-binding methyltransferase superfamily. RNA methyltransferase RlmE family.

Its subcellular location is the cytoplasm. The enzyme catalyses uridine(2552) in 23S rRNA + S-adenosyl-L-methionine = 2'-O-methyluridine(2552) in 23S rRNA + S-adenosyl-L-homocysteine + H(+). Functionally, specifically methylates the uridine in position 2552 of 23S rRNA at the 2'-O position of the ribose in the fully assembled 50S ribosomal subunit. This chain is Ribosomal RNA large subunit methyltransferase E, found in Stutzerimonas stutzeri (strain A1501) (Pseudomonas stutzeri).